A 542-amino-acid chain; its full sequence is CTP synthase (542 aa).

An amidoligase domain region spans residues 1–265 (MTRYIFVTGG…DDFVVERFGL (265 aa)). Ser13 lines the CTP pocket. Ser13 contacts UTP. ATP is bound by residues 14 to 19 (SLGKGI) and Asp71. Positions 71 and 139 each coordinate Mg(2+). CTP contacts are provided by residues 146–148 (DIE), 186–191 (KTKPTQ), and Lys222. UTP is bound by residues 186–191 (KTKPTQ) and Lys222. The 252-residue stretch at 290–541 (TIAMVGKYME…VKAALAQKNK (252 aa)) folds into the Glutamine amidotransferase type-1 domain. L-glutamine is bound at residue Gly351. Catalysis depends on Cys378, which acts as the Nucleophile; for glutamine hydrolysis. Residues 379–382 (LGMQ), Glu402, and Arg469 each bind L-glutamine. Residues His514 and Glu516 contribute to the active site.

It belongs to the CTP synthase family. In terms of assembly, homotetramer.

The enzyme catalyses UTP + L-glutamine + ATP + H2O = CTP + L-glutamate + ADP + phosphate + 2 H(+). It catalyses the reaction L-glutamine + H2O = L-glutamate + NH4(+). The catalysed reaction is UTP + NH4(+) + ATP = CTP + ADP + phosphate + 2 H(+). Its pathway is pyrimidine metabolism; CTP biosynthesis via de novo pathway; CTP from UDP: step 2/2. With respect to regulation, allosterically activated by GTP, when glutamine is the substrate; GTP has no effect on the reaction when ammonia is the substrate. The allosteric effector GTP functions by stabilizing the protein conformation that binds the tetrahedral intermediate(s) formed during glutamine hydrolysis. Inhibited by the product CTP, via allosteric rather than competitive inhibition. Functionally, catalyzes the ATP-dependent amination of UTP to CTP with either L-glutamine or ammonia as the source of nitrogen. Regulates intracellular CTP levels through interactions with the four ribonucleotide triphosphates. This is CTP synthase from Pseudomonas entomophila (strain L48).